A 588-amino-acid polypeptide reads, in one-letter code: Sulfite reductase [NADPH] hemoprotein beta-component (588 aa).

4 residues coordinate [4Fe-4S] cluster: Cys443, Cys449, Cys488, and Cys492. Cys492 contacts siroheme.

This sequence belongs to the nitrite and sulfite reductase 4Fe-4S domain family. In terms of assembly, alpha(8)-beta(8). The alpha component is a flavoprotein, the beta component is a hemoprotein. The cofactor is siroheme. It depends on [4Fe-4S] cluster as a cofactor.

The catalysed reaction is hydrogen sulfide + 3 NADP(+) + 3 H2O = sulfite + 3 NADPH + 4 H(+). The protein operates within sulfur metabolism; hydrogen sulfide biosynthesis; hydrogen sulfide from sulfite (NADPH route): step 1/1. Functionally, component of the sulfite reductase complex that catalyzes the 6-electron reduction of sulfite to sulfide. This is one of several activities required for the biosynthesis of L-cysteine from sulfate. This Actinobacillus succinogenes (strain ATCC 55618 / DSM 22257 / CCUG 43843 / 130Z) protein is Sulfite reductase [NADPH] hemoprotein beta-component.